A 423-amino-acid polypeptide reads, in one-letter code: Gamma-glutamyl phosphate reductase (423 aa).

This sequence belongs to the gamma-glutamyl phosphate reductase family.

It is found in the cytoplasm. It carries out the reaction L-glutamate 5-semialdehyde + phosphate + NADP(+) = L-glutamyl 5-phosphate + NADPH + H(+). Its pathway is amino-acid biosynthesis; L-proline biosynthesis; L-glutamate 5-semialdehyde from L-glutamate: step 2/2. In terms of biological role, catalyzes the NADPH-dependent reduction of L-glutamate 5-phosphate into L-glutamate 5-semialdehyde and phosphate. The product spontaneously undergoes cyclization to form 1-pyrroline-5-carboxylate. In Paraburkholderia phymatum (strain DSM 17167 / CIP 108236 / LMG 21445 / STM815) (Burkholderia phymatum), this protein is Gamma-glutamyl phosphate reductase.